The following is a 255-amino-acid chain: Thiazole synthase (255 aa).

Lys96 serves as the catalytic Schiff-base intermediate with DXP. 1-deoxy-D-xylulose 5-phosphate-binding positions include Gly157, 183 to 184 (AG), and 205 to 206 (NT).

Belongs to the ThiG family. As to quaternary structure, homotetramer. Forms heterodimers with either ThiH or ThiS.

The protein localises to the cytoplasm. The catalysed reaction is [ThiS sulfur-carrier protein]-C-terminal-Gly-aminoethanethioate + 2-iminoacetate + 1-deoxy-D-xylulose 5-phosphate = [ThiS sulfur-carrier protein]-C-terminal Gly-Gly + 2-[(2R,5Z)-2-carboxy-4-methylthiazol-5(2H)-ylidene]ethyl phosphate + 2 H2O + H(+). The protein operates within cofactor biosynthesis; thiamine diphosphate biosynthesis. In terms of biological role, catalyzes the rearrangement of 1-deoxy-D-xylulose 5-phosphate (DXP) to produce the thiazole phosphate moiety of thiamine. Sulfur is provided by the thiocarboxylate moiety of the carrier protein ThiS. In vitro, sulfur can be provided by H(2)S. This Bacillus licheniformis (strain ATCC 14580 / DSM 13 / JCM 2505 / CCUG 7422 / NBRC 12200 / NCIMB 9375 / NCTC 10341 / NRRL NRS-1264 / Gibson 46) protein is Thiazole synthase.